Consider the following 394-residue polypeptide: Probable fatty acyl-CoA transferase Rv3272 (394 aa).

Catalysis depends on D175, which acts as the Nucleophile.

The protein belongs to the CoA-transferase III family. As to quaternary structure, homodimer.

Its function is as follows. Probably involved in fatty acid metabolism. Binds to fatty acyl-CoAs of varying carbon chain lengths, with the highest binding affinity for palmitoyl-CoA (C16:0). In vitro, alters the cell wall lipid profile and protects mycobacteria from acidic, oxidative and antibiotic stress. May play a significant role in host-pathogen interaction. The polypeptide is Probable fatty acyl-CoA transferase Rv3272 (Mycobacterium tuberculosis (strain ATCC 25618 / H37Rv)).